The sequence spans 246 residues: Envelope glycoprotein gp95 (246 aa).

The Extracellular portion of the chain corresponds to isoleucine 1–leucine 192. Asparagine 31 is a glycosylation site (N-linked (GlcNAc...) asparagine; by host). Residues cysteine 50 and cysteine 86 are joined by a disulfide bond. The tract at residues glycine 58–leucine 78 is fusion peptide. Residues alanine 75–leucine 125 adopt a coiled-coil conformation. The N-linked (GlcNAc...) asparagine; by host glycan is linked to asparagine 93. The interval leucine 114–glycine 130 is immunosuppression. Cysteine 131 and cysteine 138 are joined by a disulfide. A glycan (N-linked (GlcNAc...) asparagine; by host) is linked at asparagine 141. A coiled-coil region spans residues serine 143 to tryptophan 173. A helical transmembrane segment spans residues leucine 193–leucine 213. 2 S-palmitoyl cysteine; by host lipidation sites follow: cysteine 205 and cysteine 208. The Cytoplasmic segment spans residues cysteine 214–valine 246.

It belongs to the Alpharetroviruses envelope glycoprotein family. Heterodimer with the transmembrane protein. The mature envelope protein (Env) consists of a trimer of SU-TM heterodimers attached by a labile interchain disulfide bond. Interacts with the host cell entry receptor TVA isoforms pg900 and pg800; this interaction allows the viral attachment. In terms of assembly, heterodimer with the surface protein. The mature envelope protein (Env) consists of a trimer of SU-TM heterodimers attached by a labile interchain disulfide bond. Specific enzymatic cleavages in vivo yield mature proteins. Envelope glycoproteins are synthesized as an inactive precursor that is N-glycosylated and processed likely by host cell furin or by a furin-like protease in the Golgi to yield the mature SU and TM proteins. The cleavage site between SU and TM requires the minimal sequence [KR]-X-[KR]-R. In terms of processing, the transmembrane protein is palmitoylated. Palmitoylation is necessary for glycoprotein function and infectivity.

The protein localises to the virion membrane. Its subcellular location is the host cell membrane. The surface protein (SU) attaches the virus to the host cell entry receptor TVA. This interaction triggers the refolding of the transmembrane protein (TM) thereby unmasking its fusion peptide and the formation of a reactive thiolate to activate its fusogenic potential. Fusion occurs at the host cell plasma membrane. Its function is as follows. The transmembrane protein (TM) acts as a class I viral fusion protein. Under the current model, the protein has at least 3 conformational states: pre-fusion native state, pre-hairpin intermediate state, and post-fusion hairpin state. During viral and target cell membrane fusion, the coiled coil regions (heptad repeats) assume a trimer-of-hairpins structure, positioning the fusion peptide in close proximity to the C-terminal region of the ectodomain. The formation of this structure appears to drive apposition and subsequent fusion of viral and target cell membranes. Membranes fusion leads to delivery of the nucleocapsid into the cytoplasm. This Rous sarcoma virus subgroup A (strain Schmidt-Ruppin) (RSV-SR-A) protein is Envelope glycoprotein gp95 (env).